A 129-amino-acid polypeptide reads, in one-letter code: Small ribosomal subunit protein uS12 (129 aa).

3-methylthioaspartic acid is present on D89. Positions 110-129 (RKQGRSRYGAPRKQVVATKK) are disordered.

The protein belongs to the universal ribosomal protein uS12 family. As to quaternary structure, part of the 30S ribosomal subunit. Contacts proteins S8 and S17. May interact with IF1 in the 30S initiation complex.

Its function is as follows. With S4 and S5 plays an important role in translational accuracy. Functionally, interacts with and stabilizes bases of the 16S rRNA that are involved in tRNA selection in the A site and with the mRNA backbone. Located at the interface of the 30S and 50S subunits, it traverses the body of the 30S subunit contacting proteins on the other side and probably holding the rRNA structure together. The combined cluster of proteins S8, S12 and S17 appears to hold together the shoulder and platform of the 30S subunit. The protein is Small ribosomal subunit protein uS12 of Rickettsia bellii (strain OSU 85-389).